The primary structure comprises 645 residues: Meiosis induction protein kinase IME2/SME1 (645 aa).

Positions 1–24 (MVEKRSRQSSSSGSEFSVPPDVDN) are disordered. Residues 8-17 (QSSSSGSEFS) show a composition bias toward low complexity. The 349-residue stretch at 38 to 386 (YQLIEKLGAG…AQELCEMPFF (349 aa)) folds into the Protein kinase domain. Residues 44 to 52 (LGAGSFGCV) and lysine 67 each bind ATP. Aspartate 193 (proton acceptor) is an active-site residue.

It belongs to the protein kinase superfamily. Ser/Thr protein kinase family.

The catalysed reaction is L-seryl-[protein] + ATP = O-phospho-L-seryl-[protein] + ADP + H(+). The enzyme catalyses L-threonyl-[protein] + ATP = O-phospho-L-threonyl-[protein] + ADP + H(+). Its function is as follows. Protein kinase which is essential for the initiation of meiosis and sporulation. The sequence is that of Meiosis induction protein kinase IME2/SME1 (IME2) from Saccharomyces cerevisiae (strain ATCC 204508 / S288c) (Baker's yeast).